The following is a 221-amino-acid chain: uncharacterized protein (221 aa).

This is an uncharacterized protein from Methanocaldococcus jannaschii (strain ATCC 43067 / DSM 2661 / JAL-1 / JCM 10045 / NBRC 100440) (Methanococcus jannaschii).